A 75-amino-acid polypeptide reads, in one-letter code: MPITSKYTDEQVETILTEIGAVLDKHGATPELSLMIAGNIATNVLNQQVAASQRKLIAEKFAQALISSLQEPKTH.

This sequence belongs to the UPF0352 family.

This chain is UPF0352 protein VV1_3121, found in Vibrio vulnificus (strain CMCP6).